The sequence spans 134 residues: Large ribosomal subunit protein bL20 (134 aa).

Belongs to the bacterial ribosomal protein bL20 family.

In terms of biological role, binds directly to 23S ribosomal RNA and is necessary for the in vitro assembly process of the 50S ribosomal subunit. It is not involved in the protein synthesizing functions of that subunit. This is Large ribosomal subunit protein bL20 from Sinorhizobium fredii (strain NBRC 101917 / NGR234).